The chain runs to 619 residues: Leucine aminopeptidase 2 (619 aa).

Residues 141 to 143 and 273 to 278 each bind a peptide; these read QCQ and PYGGME. Residue histidine 302 coordinates Zn(2+). Residue glutamate 303 is the Proton acceptor of the active site. Histidine 306 and glutamate 325 together coordinate Zn(2+). Tyrosine 390 serves as the catalytic Proton donor.

It belongs to the peptidase M1 family. Zn(2+) is required as a cofactor.

Its subcellular location is the cytoplasm. The protein localises to the nucleus. It catalyses the reaction an epoxide + H2O = an ethanediol. Functionally, aminopeptidase that preferentially cleaves di- and tripeptides. Also has low epoxide hydrolase activity (in vitro). Can hydrolyze the epoxide leukotriene LTA(4) but it forms preferentially 5,6-dihydroxy-7,9,11,14-eicosatetraenoic acid rather than the cytokine leukotriene B(4) as the product compared to the homologous mammalian enzyme (in vitro). This Coccidioides immitis (strain RS) (Valley fever fungus) protein is Leucine aminopeptidase 2.